The sequence spans 278 residues: RsbT co-antagonist protein RsbRD (278 aa).

The STAS domain maps to 160–271; it reads SAPIMPITDG…QSLAKALANK (112 aa). Threonine 181 carries the phosphothreonine modification.

Probably present in the stressosome with RsbRA, RsbRB, RsbRC and RsbS. Post-translationally, phosphorylated by RsbT.

In terms of biological role, one of 4 functionally non-identical RsbR paralogs, it functions in the environmental signaling branch of the general stress response. Negative regulator of sigma-B activity. Non-phosphorylated RsbS binds to RsbT, preventing its association with RsbU. Requires any one of RsbRA, RsbRB, RsbRC or RsbRD to sequester RsbT. When RsbS and the RsbR paralog(s) are phosphorylated, they release RsbT, which can then bind and activate RsbU. In Bacillus subtilis (strain 168), this protein is RsbT co-antagonist protein RsbRD (rsbRD).